Here is a 557-residue protein sequence, read N- to C-terminus: Formate--tetrahydrofolate ligase (557 aa).

65-72 (TPAGEGKT) serves as a coordination point for ATP.

The protein belongs to the formate--tetrahydrofolate ligase family.

It catalyses the reaction (6S)-5,6,7,8-tetrahydrofolate + formate + ATP = (6R)-10-formyltetrahydrofolate + ADP + phosphate. The protein operates within one-carbon metabolism; tetrahydrofolate interconversion. This Methylorubrum extorquens (strain PA1) (Methylobacterium extorquens) protein is Formate--tetrahydrofolate ligase.